The sequence spans 355 residues: tRNA pseudouridine synthase D (355 aa).

The active-site Nucleophile is aspartate 84. One can recognise a TRUD domain in the interval 160-306 (GVPNYFGLQR…MAHERRILRL (147 aa)).

The protein belongs to the pseudouridine synthase TruD family.

The catalysed reaction is uridine(13) in tRNA = pseudouridine(13) in tRNA. Its function is as follows. Responsible for synthesis of pseudouridine from uracil-13 in transfer RNAs. In Pseudomonas aeruginosa (strain ATCC 15692 / DSM 22644 / CIP 104116 / JCM 14847 / LMG 12228 / 1C / PRS 101 / PAO1), this protein is tRNA pseudouridine synthase D.